We begin with the raw amino-acid sequence, 305 residues long: Coenzyme PQQ synthesis protein B (305 aa).

Belongs to the PqqB family.

Its pathway is cofactor biosynthesis; pyrroloquinoline quinone biosynthesis. Functionally, may be involved in the transport of PQQ or its precursor to the periplasm. The protein is Coenzyme PQQ synthesis protein B of Methylobacillus flagellatus.